A 625-amino-acid chain; its full sequence is tRNA uridine 5-carboxymethylaminomethyl modification enzyme MnmG (625 aa).

An FAD-binding site is contributed by 13 to 18 (GGGHAG). 273-287 (GPRYCPSIEDKVVRF) contacts NAD(+).

It belongs to the MnmG family. In terms of assembly, homodimer. Heterotetramer of two MnmE and two MnmG subunits. The cofactor is FAD.

Its subcellular location is the cytoplasm. In terms of biological role, NAD-binding protein involved in the addition of a carboxymethylaminomethyl (cmnm) group at the wobble position (U34) of certain tRNAs, forming tRNA-cmnm(5)s(2)U34. The sequence is that of tRNA uridine 5-carboxymethylaminomethyl modification enzyme MnmG from Methylococcus capsulatus (strain ATCC 33009 / NCIMB 11132 / Bath).